We begin with the raw amino-acid sequence, 31 residues long: Cytochrome b6-f complex subunit 6 (31 aa).

A helical membrane pass occupies residues 4–24; that stretch reads LLSYFAFLMLALTFTLALFVG.

It belongs to the PetL family. In terms of assembly, the 4 large subunits of the cytochrome b6-f complex are cytochrome b6, subunit IV (17 kDa polypeptide, PetD), cytochrome f and the Rieske protein, while the 4 small subunits are PetG, PetL, PetM and PetN. The complex functions as a dimer.

It localises to the plastid. The protein resides in the chloroplast thylakoid membrane. In terms of biological role, component of the cytochrome b6-f complex, which mediates electron transfer between photosystem II (PSII) and photosystem I (PSI), cyclic electron flow around PSI, and state transitions. PetL is important for photoautotrophic growth as well as for electron transfer efficiency and stability of the cytochrome b6-f complex. The chain is Cytochrome b6-f complex subunit 6 from Adiantum capillus-veneris (Maidenhair fern).